The primary structure comprises 261 residues: Enolase-phosphatase E1 (261 aa).

Mg(2+)-binding residues include Asp-16 and Glu-18. Substrate is bound by residues 153–154 (SS) and Lys-187. Asp-212 provides a ligand contact to Mg(2+).

Belongs to the HAD-like hydrolase superfamily. MasA/MtnC family. Monomer. It depends on Mg(2+) as a cofactor.

It is found in the cytoplasm. It localises to the nucleus. The enzyme catalyses 5-methylsulfanyl-2,3-dioxopentyl phosphate + H2O = 1,2-dihydroxy-5-(methylsulfanyl)pent-1-en-3-one + phosphate. The protein operates within amino-acid biosynthesis; L-methionine biosynthesis via salvage pathway; L-methionine from S-methyl-5-thio-alpha-D-ribose 1-phosphate: step 3/6. It participates in amino-acid biosynthesis; L-methionine biosynthesis via salvage pathway; L-methionine from S-methyl-5-thio-alpha-D-ribose 1-phosphate: step 4/6. Functionally, bifunctional enzyme that catalyzes the enolization of 2,3-diketo-5-methylthiopentyl-1-phosphate (DK-MTP-1-P) into the intermediate 2-hydroxy-3-keto-5-methylthiopentenyl-1-phosphate (HK-MTPenyl-1-P), which is then dephosphorylated to form the acireductone 1,2-dihydroxy-3-keto-5-methylthiopentene (DHK-MTPene). This is Enolase-phosphatase E1 (enoph1) from Salmo salar (Atlantic salmon).